We begin with the raw amino-acid sequence, 235 residues long: 7-cyano-7-deazaguanine synthase (235 aa).

Residue 16 to 26 (FSGGQDSTTCL) coordinates ATP. Zn(2+)-binding residues include Cys195, Cys204, Cys207, and Cys210.

The protein belongs to the QueC family. Zn(2+) is required as a cofactor.

It catalyses the reaction 7-carboxy-7-deazaguanine + NH4(+) + ATP = 7-cyano-7-deazaguanine + ADP + phosphate + H2O + H(+). It functions in the pathway purine metabolism; 7-cyano-7-deazaguanine biosynthesis. Its function is as follows. Catalyzes the ATP-dependent conversion of 7-carboxy-7-deazaguanine (CDG) to 7-cyano-7-deazaguanine (preQ(0)). The protein is 7-cyano-7-deazaguanine synthase of Shewanella frigidimarina (strain NCIMB 400).